The primary structure comprises 282 residues: Protein NEOXANTHIN-DEFICIENT 1 (282 aa).

Required for neoxanthin biosynthesis. Probably not involved directly in the enzymatic conversion of violaxanthin to neoxanthin. Is necessary but not sufficient for neoxanthin synthesis. This is Protein NEOXANTHIN-DEFICIENT 1 from Arabidopsis thaliana (Mouse-ear cress).